A 649-amino-acid polypeptide reads, in one-letter code: Acetyl-coenzyme A synthetase (649 aa).

Residues 191–194, threonine 311, and asparagine 335 each bind CoA; that span reads RGGR. ATP-binding positions include 387–389, 411–416, aspartate 500, and arginine 515; these read GEP and DTWWQT. Serine 523 is a CoA binding site. Position 526 (arginine 526) interacts with ATP. Mg(2+) contacts are provided by valine 537, histidine 539, and isoleucine 542. Arginine 584 provides a ligand contact to CoA. Lysine 609 carries the post-translational modification N6-acetyllysine.

The protein belongs to the ATP-dependent AMP-binding enzyme family. It depends on Mg(2+) as a cofactor. Acetylated. Deacetylation by the SIR2-homolog deacetylase activates the enzyme.

The enzyme catalyses acetate + ATP + CoA = acetyl-CoA + AMP + diphosphate. Its function is as follows. Catalyzes the conversion of acetate into acetyl-CoA (AcCoA), an essential intermediate at the junction of anabolic and catabolic pathways. AcsA undergoes a two-step reaction. In the first half reaction, AcsA combines acetate with ATP to form acetyl-adenylate (AcAMP) intermediate. In the second half reaction, it can then transfer the acetyl group from AcAMP to the sulfhydryl group of CoA, forming the product AcCoA. The chain is Acetyl-coenzyme A synthetase from Psychromonas ingrahamii (strain DSM 17664 / CCUG 51855 / 37).